We begin with the raw amino-acid sequence, 561 residues long: Arginine--tRNA ligase (561 aa).

Residues 129-139 carry the 'HIGH' region motif; it reads ANPTGPLHVGH.

It belongs to the class-I aminoacyl-tRNA synthetase family. Monomer.

Its subcellular location is the cytoplasm. The catalysed reaction is tRNA(Arg) + L-arginine + ATP = L-arginyl-tRNA(Arg) + AMP + diphosphate. The sequence is that of Arginine--tRNA ligase from Polaromonas sp. (strain JS666 / ATCC BAA-500).